A 175-amino-acid chain; its full sequence is VQ motif-containing protein 25 (175 aa).

A VQ motif is present at residues Phe-50–Gly-59.

The protein resides in the nucleus. Its function is as follows. May function as negative regulator of plant defense. This Arabidopsis thaliana (Mouse-ear cress) protein is VQ motif-containing protein 25.